The sequence spans 360 residues: DNA polymerase IV (360 aa).

The 182-residue stretch at Ile8–Gly189 folds into the UmuC domain. 2 residues coordinate Mg(2+): Asp12 and Asp107. Glu108 is an active-site residue.

Belongs to the DNA polymerase type-Y family. Monomer. The cofactor is Mg(2+).

It is found in the cytoplasm. It carries out the reaction DNA(n) + a 2'-deoxyribonucleoside 5'-triphosphate = DNA(n+1) + diphosphate. Poorly processive, error-prone DNA polymerase involved in untargeted mutagenesis. Copies undamaged DNA at stalled replication forks, which arise in vivo from mismatched or misaligned primer ends. These misaligned primers can be extended by PolIV. Exhibits no 3'-5' exonuclease (proofreading) activity. May be involved in translesional synthesis, in conjunction with the beta clamp from PolIII. This is DNA polymerase IV from Vibrio cholerae serotype O1 (strain ATCC 39541 / Classical Ogawa 395 / O395).